We begin with the raw amino-acid sequence, 467 residues long: Protein indeterminate-domain 6, chloroplastic (467 aa).

The transit peptide at 1–20 (MSSSYNTIALSSTPTFLLSS) directs the protein to the chloroplast. Residues 38 to 65 (TMVQQQPTSSVAPPPKKRRNQPGNPNPD) form a disordered region. Polar residues predominate over residues 39-48 (MVQQQPTSSV). At serine 72 the chain carries Phosphoserine. 2 C2H2-type zinc fingers span residues 82–104 (FLCEVCNKGFQREQNLQLHRRGH) and 123–153 (YLCPEPSCVHHDPARALGDLTGIKKHYYRKH). Residues 158–181 (WKCDKCSKRYAVQSDWKAHSKTCG) form a C2H2-type 2; degenerate zinc finger. Residues cysteine 160, cysteine 163, histidine 176, cysteine 180, cysteine 187, cysteine 189, histidine 202, and cysteine 206 each coordinate Zn(2+). A CCHC-type 2; atypical zinc finger spans residues 185 to 208 (YRCDCGTIFSRRDSYITHRAFCDA). An SHR-binding region spans residues 195–207 (RRDSYITHRAFCD). Residues 440 to 467 (NGRGGRSGGPPLDAEMKFSHPNHPYGKA) form a disordered region.

Its subcellular location is the plastid. The protein localises to the chloroplast. In terms of biological role, probable transcription factor. The chain is Protein indeterminate-domain 6, chloroplastic from Arabidopsis thaliana (Mouse-ear cress).